A 105-amino-acid chain; its full sequence is MPKKVLTGVVVSDKMQKTVTVLVERQFPHPLYGKVIKRSKKYLAHDPEERYKVGDVVEIIEARPISKRKRFRVLRLVEEGRLDLVEKYLVRRQNYASLSKRGGKA.

Belongs to the universal ribosomal protein uS17 family. Part of the 30S ribosomal subunit.

In terms of biological role, one of the primary rRNA binding proteins, it binds specifically to the 5'-end of 16S ribosomal RNA. This Thermus aquaticus protein is Small ribosomal subunit protein uS17.